A 402-amino-acid polypeptide reads, in one-letter code: Mannonate dehydratase (402 aa).

This sequence belongs to the mannonate dehydratase family. Fe(2+) serves as cofactor. The cofactor is Mn(2+).

The catalysed reaction is D-mannonate = 2-dehydro-3-deoxy-D-gluconate + H2O. Its pathway is carbohydrate metabolism; pentose and glucuronate interconversion. In terms of biological role, catalyzes the dehydration of D-mannonate. The chain is Mannonate dehydratase from Rhizobium meliloti (strain 1021) (Ensifer meliloti).